A 134-amino-acid chain; its full sequence is Ribosome-binding factor A (134 aa).

This sequence belongs to the RbfA family. As to quaternary structure, monomer. Binds 30S ribosomal subunits, but not 50S ribosomal subunits or 70S ribosomes.

It is found in the cytoplasm. Its function is as follows. One of several proteins that assist in the late maturation steps of the functional core of the 30S ribosomal subunit. Associates with free 30S ribosomal subunits (but not with 30S subunits that are part of 70S ribosomes or polysomes). Required for efficient processing of 16S rRNA. May interact with the 5'-terminal helix region of 16S rRNA. This Psychrobacter arcticus (strain DSM 17307 / VKM B-2377 / 273-4) protein is Ribosome-binding factor A.